The sequence spans 84 residues: U8-theraphotoxin-Hhn1d (84 aa).

The N-terminal stretch at 1-21 (MKVVLIVCLVWVMAMMELVSC) is a signal peptide. Disulfide bonds link Cys-23–Cys-35, Cys-29–Cys-44, Cys-34–Cys-67, Cys-54–Cys-75, and Cys-69–Cys-81.

This sequence belongs to the AVIT (prokineticin) family. Expressed by the venom gland.

Its subcellular location is the secreted. The protein is U8-theraphotoxin-Hhn1d of Cyriopagopus hainanus (Chinese bird spider).